A 307-amino-acid polypeptide reads, in one-letter code: MKSQWHGTCDLRLFKSSRSNNKDVVKTIHQAKCTAPLKVMRVFNDKKDGRCEIPILHSAGGIVGGDQLTINVNAEEDSIAICSSVAAQKVYGSRGRSKLNPQGSWANQKCFFQIKKNSDFEWIPQELIVYQGGLFEQNMTVNLDLSSSFLCVDLVRLGRTAAEEQLGNGVWRSSLEIFRDNNQGKHYEFSDRLELSGEALKSIHGLEQKPVFGSLTWITPKKIKQKDLSDLLVECREQRAGLEGFMTCSLLENGISARYTGSSTQSARFWFYRIWSLTRILRKLSMPEYMRIWPMQENPSRDKKCPS.

It belongs to the UreD family. In terms of assembly, ureD, UreF and UreG form a complex that acts as a GTP-hydrolysis-dependent molecular chaperone, activating the urease apoprotein by helping to assemble the nickel containing metallocenter of UreC. The UreE protein probably delivers the nickel.

Its subcellular location is the cytoplasm. Functionally, required for maturation of urease via the functional incorporation of the urease nickel metallocenter. This is Urease accessory protein UreD from Prochlorococcus marinus (strain NATL1A).